The following is a 221-amino-acid chain: Glutathione peroxidase 6 (221 aa).

The N-terminal stretch at 1-19 is a signal peptide; the sequence is MAQKLWGSCLFSLFMAALA. The active site involves cysteine 73.

It belongs to the glutathione peroxidase family.

Its subcellular location is the secreted. The catalysed reaction is 2 glutathione + H2O2 = glutathione disulfide + 2 H2O. The chain is Glutathione peroxidase 6 (Gpx6) from Mus musculus (Mouse).